A 361-amino-acid chain; its full sequence is Phospho-N-acetylmuramoyl-pentapeptide-transferase (361 aa).

The next 10 helical transmembrane spans lie at 25 to 45 (RAVLASLTALGIGLALGPWVI), 73 to 93 (TMGGTLILLSIGITTLLWADL), 97 to 117 (YVWLLLAVLFGTGAIGFYDDW), 134 to 154 (MFWQSAIAIFAGIYLISTASL), 168 to 188 (VIYPFGVVGFCILTYFVIVGT), 200 to 220 (GLAAMPVVMVSAALAVFAYVA), 240 to 260 (VAVFCAAMAGACLAFLWFNAY), 264 to 284 (VFMGDVGALALGAALGTVAVI), 289 to 309 (IVLFVMGGLFVMEALSVMIQV), and 338 to 358 (QVVVRFWIITMMLVLAGLSTL).

The protein belongs to the glycosyltransferase 4 family. MraY subfamily. Mg(2+) serves as cofactor.

The protein resides in the cell inner membrane. The catalysed reaction is UDP-N-acetyl-alpha-D-muramoyl-L-alanyl-gamma-D-glutamyl-meso-2,6-diaminopimeloyl-D-alanyl-D-alanine + di-trans,octa-cis-undecaprenyl phosphate = di-trans,octa-cis-undecaprenyl diphospho-N-acetyl-alpha-D-muramoyl-L-alanyl-D-glutamyl-meso-2,6-diaminopimeloyl-D-alanyl-D-alanine + UMP. It participates in cell wall biogenesis; peptidoglycan biosynthesis. Catalyzes the initial step of the lipid cycle reactions in the biosynthesis of the cell wall peptidoglycan: transfers peptidoglycan precursor phospho-MurNAc-pentapeptide from UDP-MurNAc-pentapeptide onto the lipid carrier undecaprenyl phosphate, yielding undecaprenyl-pyrophosphoryl-MurNAc-pentapeptide, known as lipid I. This chain is Phospho-N-acetylmuramoyl-pentapeptide-transferase, found in Laribacter hongkongensis (strain HLHK9).